Here is an 881-residue protein sequence, read N- to C-terminus: Sodium/sulfate cotransporter 1 (881 aa).

Helical transmembrane passes span 8-28 (GIVA…DWVG), 31-51 (ITFT…VTVA), 61-81 (GLLT…TGGL), 107-127 (MVLS…PILI), 140-160 (LLIP…IGTS), and 186-206 (IFDI…FILL). RCK C-terminal domains are found at residues 212–296 (LPGN…EYGL), 318–402 (VFSA…IKTN), 407–492 (LHAV…FPGL), and 498–584 (EQVD…DKSF). The next 6 helical transmembrane spans lie at 601–621 (MIIG…GGLK), 625–645 (YIHL…TGCM), 658–678 (VYLT…TGVA), 684–704 (AIIS…AIYI), 775–795 (FAIV…FILV), and 803–823 (VWIV…LYFL). A disordered region spans residues 854–881 (SLRRQVSHTRTDDSGSSGSPLPAPKIVA).

The protein belongs to the divalent anion:Na+ symporter (DASS) superfamily. Na+/sulfate symporter (TC 2.A.47.4) family.

The protein localises to the cell membrane. Its function is as follows. Na(+)/sulfate cotransporter with a probable high-affinity for sulfate and a proteasome dependent turnover. The polypeptide is Sodium/sulfate cotransporter 1 (SLT1) (Chlamydomonas reinhardtii (Chlamydomonas smithii)).